A 237-amino-acid chain; its full sequence is tRNA (guanine-N(7)-)-methyltransferase (237 aa).

4 residues coordinate S-adenosyl-L-methionine: Glu-68, Glu-93, Asp-120, and Asp-143. Residue Asp-143 is part of the active site. Substrate contacts are provided by residues Lys-147, Asp-179, and 216-219 (TKFE).

It belongs to the class I-like SAM-binding methyltransferase superfamily. TrmB family.

The enzyme catalyses guanosine(46) in tRNA + S-adenosyl-L-methionine = N(7)-methylguanosine(46) in tRNA + S-adenosyl-L-homocysteine. The protein operates within tRNA modification; N(7)-methylguanine-tRNA biosynthesis. Catalyzes the formation of N(7)-methylguanine at position 46 (m7G46) in tRNA. In Shewanella pealeana (strain ATCC 700345 / ANG-SQ1), this protein is tRNA (guanine-N(7)-)-methyltransferase.